A 731-amino-acid polypeptide reads, in one-letter code: Bifunctional trehalose-6-phosphate synthase/phosphatase (731 aa).

An alpha,alpha-trehalose-phosphate synthase region spans residues 1–464 (MRLIVVSNRL…WGTDFIYSLI (464 aa)). Arg9 provides a ligand contact to D-glucose 6-phosphate. Residue 25–26 (GG) participates in UDP-alpha-D-glucose binding. Residues Tyr89 and Asp143 each coordinate D-glucose 6-phosphate. Positions 276 and 281 each coordinate UDP-alpha-D-glucose. Position 314 (Arg314) interacts with D-glucose 6-phosphate. 379-383 (LVAKE) lines the UDP-alpha-D-glucose pocket. The interval 465–731 (SAKSAREEVE…RSLLEQLRPP (267 aa)) is trehalose-6-phosphate phosphatase. The Nucleophile role is filled by Asp503. Residues Asp503, Asp505, and Asp684 each contribute to the Mg(2+) site. Alpha,alpha-trehalose 6-phosphate is bound at residue 503 to 505 (DYD).

In the N-terminal section; belongs to the glycosyltransferase 20 family. The protein in the C-terminal section; belongs to the trehalose phosphatase family. As to quaternary structure, may interact with the putative glycosyltransferase (GT) TTX_1305. TTX_1305 is required for the trehalose-6-phosphate synthase activity of tpsp. The cofactor is Mg(2+).

It catalyses the reaction D-glucose 6-phosphate + UDP-alpha-D-glucose = alpha,alpha-trehalose 6-phosphate + UDP + H(+). The enzyme catalyses alpha,alpha-trehalose 6-phosphate + H2O = alpha,alpha-trehalose + phosphate. It participates in glycan biosynthesis; trehalose biosynthesis. Bifunctional enzyme which catalyzes the transfer of glucose from UDP-alpha-D-glucose to glucose-6-phosphate to form trehalose-6-phosphate (Tre6P) and removes the phosphate from Tre6P to produce free trehalose. In Thermoproteus tenax (strain ATCC 35583 / DSM 2078 / JCM 9277 / NBRC 100435 / Kra 1), this protein is Bifunctional trehalose-6-phosphate synthase/phosphatase.